The chain runs to 70 residues: Small ribosomal subunit protein bS21 (70 aa).

The protein belongs to the bacterial ribosomal protein bS21 family.

This Sulfurimonas denitrificans (strain ATCC 33889 / DSM 1251) (Thiomicrospira denitrificans (strain ATCC 33889 / DSM 1251)) protein is Small ribosomal subunit protein bS21.